Here is a 141-residue protein sequence, read N- to C-terminus: Nucleoside diphosphate kinase (141 aa).

Lys-9, Phe-57, Arg-85, Thr-91, Arg-102, and Asn-112 together coordinate ATP. The Pros-phosphohistidine intermediate role is filled by His-115.

The protein belongs to the NDK family. Homotetramer. It depends on Mg(2+) as a cofactor.

It is found in the cytoplasm. It catalyses the reaction a 2'-deoxyribonucleoside 5'-diphosphate + ATP = a 2'-deoxyribonucleoside 5'-triphosphate + ADP. The enzyme catalyses a ribonucleoside 5'-diphosphate + ATP = a ribonucleoside 5'-triphosphate + ADP. In terms of biological role, major role in the synthesis of nucleoside triphosphates other than ATP. The ATP gamma phosphate is transferred to the NDP beta phosphate via a ping-pong mechanism, using a phosphorylated active-site intermediate. In Prosthecochloris aestuarii (strain DSM 271 / SK 413), this protein is Nucleoside diphosphate kinase.